The primary structure comprises 351 residues: Polyribonucleotide 5'-hydroxyl-kinase TK1956 (351 aa).

34–41 (GGVDSGKS) lines the ATP pocket.

It depends on a divalent metal cation as a cofactor.

The enzyme catalyses a 5'-end dephospho-2'-deoxyribonucleoside-DNA + ATP = a 5'-end 5'-phospho-2'-deoxyribonucleoside-DNA + ADP + H(+). It carries out the reaction a 5'-end dephospho-ribonucleoside-RNA + ATP = a 5'-end 5'-phospho-ribonucleoside-RNA + ADP + H(+). Its function is as follows. Polynucleotide kinase that can phosphorylate the 5'-hydroxyl groups of both single-stranded RNA (ssRNA) and single-stranded DNA (ssDNA). Exhibits a strong preference for ssRNA. The polypeptide is Polyribonucleotide 5'-hydroxyl-kinase TK1956 (Thermococcus kodakarensis (strain ATCC BAA-918 / JCM 12380 / KOD1) (Pyrococcus kodakaraensis (strain KOD1))).